A 277-amino-acid chain; its full sequence is Ribosomal RNA small subunit methyltransferase A (277 aa).

S-adenosyl-L-methionine is bound by residues His-20, Leu-22, Gly-47, Glu-71, Asp-94, and Asn-116.

The protein belongs to the class I-like SAM-binding methyltransferase superfamily. rRNA adenine N(6)-methyltransferase family. RsmA subfamily.

The protein resides in the cytoplasm. It catalyses the reaction adenosine(1518)/adenosine(1519) in 16S rRNA + 4 S-adenosyl-L-methionine = N(6)-dimethyladenosine(1518)/N(6)-dimethyladenosine(1519) in 16S rRNA + 4 S-adenosyl-L-homocysteine + 4 H(+). Its function is as follows. Specifically dimethylates two adjacent adenosines (A1518 and A1519) in the loop of a conserved hairpin near the 3'-end of 16S rRNA in the 30S particle. May play a critical role in biogenesis of 30S subunits. The chain is Ribosomal RNA small subunit methyltransferase A from Burkholderia sp.